A 334-amino-acid polypeptide reads, in one-letter code: Glycerol-3-phosphate dehydrogenase [NAD(P)+] (334 aa).

The NADPH site is built by S14, Y15, H35, and K109. K109, G138, and T140 together coordinate sn-glycerol 3-phosphate. NADPH is bound at residue A142. Sn-glycerol 3-phosphate contacts are provided by K194, D247, S257, R258, and N259. The active-site Proton acceptor is the K194. R258 is an NADPH binding site. 2 residues coordinate NADPH: V282 and E284.

It belongs to the NAD-dependent glycerol-3-phosphate dehydrogenase family.

It localises to the cytoplasm. The enzyme catalyses sn-glycerol 3-phosphate + NAD(+) = dihydroxyacetone phosphate + NADH + H(+). It catalyses the reaction sn-glycerol 3-phosphate + NADP(+) = dihydroxyacetone phosphate + NADPH + H(+). The protein operates within membrane lipid metabolism; glycerophospholipid metabolism. Its function is as follows. Catalyzes the reduction of the glycolytic intermediate dihydroxyacetone phosphate (DHAP) to sn-glycerol 3-phosphate (G3P), the key precursor for phospholipid synthesis. This Psychromonas ingrahamii (strain DSM 17664 / CCUG 51855 / 37) protein is Glycerol-3-phosphate dehydrogenase [NAD(P)+].